An 832-amino-acid polypeptide reads, in one-letter code: DEAD-box ATP-dependent RNA helicase 13 (832 aa).

Pro residues predominate over residues 1-12 (MAAAPPPPPPPQ). Disordered regions lie at residues 1 to 59 (MAAA…TMVE) and 91 to 173 (VEDL…DDNV). The segment covering 29 to 42 (RKGKKSRGAKKPRR) has biased composition (basic residues). Low complexity predominate over residues 43–55 (AAAAAAASTSSAG). Basic residues predominate over residues 105 to 114 (QKKKKRKKRK). Residues 128–137 (LVVECEEEGE) show a composition bias toward acidic residues. Residues 141–155 (KRVKKKRRSRKKRKV) show a composition bias toward basic residues. The span at 156–167 (KEMEEKMESKED) shows a compositional bias: basic and acidic residues. A Q motif motif is present at residues 198 to 226 (YAWRELRLHPLLITAVRRLGFKEPTPIQK). In terms of domain architecture, Helicase ATP-binding spans 230–447 (PAAAHQGKDV…KLKRGLVTAK (218 aa)). ATP is bound at residue 243–250 (AETGSGKT). Residues 371-374 (DEAD) carry the DEAD box motif. The Helicase C-terminal domain occupies 484–645 (KLEESFIECS…QFPVDHAYMP (162 aa)). The segment at 800 to 832 (RRLAENWRRKKQKEKKSTREQKRKEKRIAKERD) is disordered. A compositionally biased stretch (basic and acidic residues) spans 814-832 (KKSTREQKRKEKRIAKERD).

This sequence belongs to the DEAD box helicase family. DDX24/MAK5 subfamily.

It catalyses the reaction ATP + H2O = ADP + phosphate + H(+). This is DEAD-box ATP-dependent RNA helicase 13 from Oryza sativa subsp. japonica (Rice).